Reading from the N-terminus, the 471-residue chain is Glutamine synthetase (471 aa).

The region spanning 14–99 (QKIQMIDLKF…ICSIKEPRTG (86 aa)) is the GS beta-grasp domain. The region spanning 106-471 (PRVIAQKAID…PYEFYLYYDC (366 aa)) is the GS catalytic domain. Glu131 and Glu133 together coordinate Mg(2+). ATP is bound at residue Glu208. The Mg(2+) site is built by Glu213 and Glu221. Residues 265–266 (NG) and Gly266 contribute to the L-glutamate site. Residue His270 participates in Mg(2+) binding. Residues 272-274 (HQS) and Ser274 contribute to the ATP site. L-glutamate contacts are provided by Arg322, Glu328, and Arg340. ATP-binding residues include Arg340, Arg345, and Lys354. A Mg(2+)-binding site is contributed by Glu359. Residue Arg361 coordinates L-glutamate. Tyr399 is subject to O-AMP-tyrosine.

Belongs to the glutamine synthetase family. As to quaternary structure, oligomer of 12 subunits arranged in the form of two hexagons. The cofactor is Mg(2+).

The protein resides in the cytoplasm. The enzyme catalyses L-glutamate + NH4(+) + ATP = L-glutamine + ADP + phosphate + H(+). The activity of this enzyme could be controlled by adenylation under conditions of abundant glutamine. In terms of biological role, involved in nitrogen metabolism via ammonium assimilation. Catalyzes the ATP-dependent biosynthesis of glutamine from glutamate and ammonia. In Microchaete diplosiphon (Fremyella diplosiphon), this protein is Glutamine synthetase.